Here is a 1063-residue protein sequence, read N- to C-terminus: Exportin-1 (1063 aa).

Positions 43 to 109 constitute an Importin N-terminal domain; the sequence is AQSILTTLKE…KKYVVSLIIK (67 aa). Residues 1034–1063 are disordered; the sequence is AEEQSNKHQMQRNIPGMLNPHELPEDMQDE.

The protein belongs to the exportin family. As to quaternary structure, interacts with Clbn (via its N-terminus). Associates with the nuclear pore complex via interaction with mbo and Nup214. Interacts with target proteins containing NES sequences such as actin and dl. High expression observed in the developing embryonic brain, hind gut and posterior spiracles shortly before dorsal closure; and in the ventral nerve cord, midgut and somatic musculature shortly after dorsal closure. Expression increases when the tissue is well developed.

It localises to the nucleus. It is found in the nucleus membrane. Receptor for the leucine-rich nuclear export signal (NES). Binds cooperatively to the NES on its target protein and to the small GTPase Ran in its active GTP-bound form. Involved in the export of dl, RpS2 and the pre-40S ribosome from the nucleus to the cytoplasm. Plays an important role in nuclear pore assembly by mediating nucleoporin condensation and biogenesis of annulate lamellae. Required for the function or maintenance of certain tissues such as brain and gut. In Drosophila melanogaster (Fruit fly), this protein is Exportin-1.